The primary structure comprises 456 residues: MAFAETYPAASSLPNGDCGRPRARPGGNRVTVVLGAQWGDEGKGKVVDLLAQDADIVCRCQGGNNAGHTVVVDSVEYDFHLLPSGIINPNVTAFIGNGVVIHLPGLFEEAEKNVQKGKGLEGWEKRLIISDRAHIVFDFHQAADGIQEQQRQEQAGKNLGTTKKGIGPVYSSKAARSGLRMCDLVSDFDGFSERFKVLANQYKSIYPTLEIDIEGELQKLKGYMEKIKPMVRDGVYFLYEALHGPPKKILVEGANAALLDIDFGTYPFVTSSNCTVGGVCTGLGMPPQNVGEVYGVVKAYTTRVGIGAFPTEQDNEIGELLQTRGREFGVTTGRKRRCGWLDLVLLKYAHMINGFTALALTKLDILDMFTEIKVGVAYKLDGEIIPHIPANQEVLNKVEVQYKTLPGWNTDISNARAFKELPVNAQNYVRFIEDELQIPVKWIGVGKSRESMIQLF.

Positions 1-24 are disordered; it reads MAFAETYPAASSLPNGDCGRPRAR. GTP-binding positions include 39-45 and 67-69; these read GDEGKGK and GHT. Asp40 (proton acceptor) is an active-site residue. Residues Asp40 and Gly67 each contribute to the Mg(2+) site. Asp40 contributes to the substrate binding site. Residues 40–43, 65–68, Thr162, Arg176, Asn255, Thr270, and Arg334 contribute to the IMP site; these read DEGK and NAGH. His68 functions as the Proton donor in the catalytic mechanism. 330-336 contacts substrate; it reads VTTGRKR. GTP is bound by residues Arg336, 362–364, and 444–447; these read KLD and GVGK.

It belongs to the adenylosuccinate synthetase family. As to quaternary structure, homodimer. It depends on Mg(2+) as a cofactor.

It localises to the cytoplasm. It is found in the mitochondrion. The catalysed reaction is IMP + L-aspartate + GTP = N(6)-(1,2-dicarboxyethyl)-AMP + GDP + phosphate + 2 H(+). Its pathway is purine metabolism; AMP biosynthesis via de novo pathway; AMP from IMP: step 1/2. Its activity is regulated as follows. Inhibited competitively by AMP and IMP and non-competitively by fructose 1,6-bisphosphate. Plays an important role in the de novo pathway and in the salvage pathway of purine nucleotide biosynthesis. Catalyzes the first committed step in the biosynthesis of AMP from IMP. This is Adenylosuccinate synthetase isozyme 2 from Homo sapiens (Human).